Consider the following 337-residue polypeptide: MRAVFIQGAEEHPAAFCYQVNGSCPRTVHTLGIQLVIYLACAAGMLIIVLGNLFVAFAVSYFKALHTPTNFLLLSLALADMFLGLLVLPLSTIRSVESCWFFGDFLCRLHTYLDPLFCLTSIFHLCFISIDRHCAICDPLLYPSKFTVRVALRYILAGWGVPAAYTSLFLYTDVVETRLSQWLEEMPCVGSCQLLLNKFWGWLNFPLFFVPCLIMISLYVKIFVVATRQAQQITTLSKNLAGAAKHDRKAAKTLGIAVGIYLLCWLPFTIDTMVDSLLHFITPPLVFDIFIWFAYFNSACNPIIYVFSYQWFRKALKLTLSQKVFSPQTRTVDLYQE.

Topologically, residues 1 to 34 (MRAVFIQGAEEHPAAFCYQVNGSCPRTVHTLGIQ) are extracellular. An N-linked (GlcNAc...) asparagine glycan is attached at N21. Intrachain disulfides connect C24/C188 and C99/C192. A helical transmembrane segment spans residues 35 to 55 (LVIYLACAAGMLIIVLGNLFV). The Cytoplasmic segment spans residues 56 to 70 (AFAVSYFKALHTPTN). The chain crosses the membrane as a helical span at residues 71–91 (FLLLSLALADMFLGLLVLPLS). At 92-109 (TIRSVESCWFFGDFLCRL) the chain is on the extracellular side. The chain crosses the membrane as a helical span at residues 110–130 (HTYLDPLFCLTSIFHLCFISI). The Cytoplasmic segment spans residues 131–154 (DRHCAICDPLLYPSKFTVRVALRY). The helical transmembrane segment at 155 to 175 (ILAGWGVPAAYTSLFLYTDVV) threads the bilayer. The tract at residues 176-189 (ETRLSQWLEEMPCV) is extracellular Loop 2 (ECL2). Over 176 to 204 (ETRLSQWLEEMPCVGSCQLLLNKFWGWLN) the chain is Extracellular. The chain crosses the membrane as a helical span at residues 205–225 (FPLFFVPCLIMISLYVKIFVV). Residues 226–253 (ATRQAQQITTLSKNLAGAAKHDRKAAKT) lie on the Cytoplasmic side of the membrane. The chain crosses the membrane as a helical span at residues 254–274 (LGIAVGIYLLCWLPFTIDTMV). The Extracellular portion of the chain corresponds to 275–284 (DSLLHFITPP). A helical transmembrane segment spans residues 285 to 307 (LVFDIFIWFAYFNSACNPIIYVF). Residues 308–337 (SYQWFRKALKLTLSQKVFSPQTRTVDLYQE) are Cytoplasmic-facing.

This sequence belongs to the G-protein coupled receptor 1 family.

It localises to the cell membrane. Its function is as follows. Olfactory receptor specific for trimethylamine, a trace amine. Trimethylamine is a bacterial metabolite found in some animal odors. Trimethylamine-binding causes a conformation change that triggers signaling via G(s)-class of G alpha proteins (GNAL or GNAS). The polypeptide is Trace amine-associated receptor 5 (TAAR5) (Pan troglodytes (Chimpanzee)).